The chain runs to 175 residues: Large ribosomal subunit protein uL6 (175 aa).

Belongs to the universal ribosomal protein uL6 family. In terms of assembly, part of the 50S ribosomal subunit.

Its function is as follows. This protein binds to the 23S rRNA, and is important in its secondary structure. It is located near the subunit interface in the base of the L7/L12 stalk, and near the tRNA binding site of the peptidyltransferase center. This is Large ribosomal subunit protein uL6 from Xanthomonas oryzae pv. oryzae (strain MAFF 311018).